Here is a 246-residue protein sequence, read N- to C-terminus: E3 ubiquitin ligase TRIM40 (246 aa).

Residues 12-55 form an RING-type zinc finger; sequence CPICLDPLKEAVSTDCRHLFCRMCLTQHMDKASVSGILSCPVCR. The B box-type zinc finger occupies 64–105; sequence GDNYICHTHQKRVRRFCEASGHLLCEECLQSPEHQSHTELSI. Positions 69, 72, 91, and 97 each coordinate Zn(2+). Residues 105–170 are a coiled coil; it reads IENAISHYKE…DQTKEQLKAL (66 aa).

It belongs to the TRIM/RBCC family. In terms of assembly, interacts with NEDD8.

It carries out the reaction S-ubiquitinyl-[E2 ubiquitin-conjugating enzyme]-L-cysteine + [acceptor protein]-L-lysine = [E2 ubiquitin-conjugating enzyme]-L-cysteine + N(6)-ubiquitinyl-[acceptor protein]-L-lysine.. E3 ubiquitin-protein ligase that plays a role in the limitation of the innate immune response. Mediates inhibition of the RLR signaling pathway by ubiquitinating RIGI and IFIH1 receptors, leading to their proteasomal degradation. Also promotes the neddylation of IKBKG/NEMO, stabilizing NFKBIA, and thereby inhibiting of NF-kappa-B nuclear translocation and activation. This Mus musculus (Mouse) protein is E3 ubiquitin ligase TRIM40 (Trim40).